Consider the following 223-residue polypeptide: Ribonuclease T (223 aa).

Acidic residues predominate over residues M1–E11. Residues M1–M21 are disordered. The region spanning V31–F205 is the Exonuclease domain. Residues D34, E36, H192, and D197 each coordinate Mg(2+). The active-site Proton donor/acceptor is the H192.

It belongs to the RNase T family. As to quaternary structure, homodimer. Mg(2+) serves as cofactor.

Its function is as follows. Trims short 3' overhangs of a variety of RNA species, leaving a one or two nucleotide 3' overhang. Responsible for the end-turnover of tRNA: specifically removes the terminal AMP residue from uncharged tRNA (tRNA-C-C-A). Also appears to be involved in tRNA biosynthesis. The chain is Ribonuclease T from Pseudomonas fluorescens (strain ATCC BAA-477 / NRRL B-23932 / Pf-5).